The primary structure comprises 38 residues: U9-ctenitoxin-Pk1a (38 aa).

Disulfide bonds link cysteine 2-cysteine 17, cysteine 9-cysteine 22, cysteine 16-cysteine 36, and cysteine 24-cysteine 34.

As to expression, expressed by the venom gland.

Its subcellular location is the secreted. In Phoneutria keyserlingi (Brazilian wandering spider), this protein is U9-ctenitoxin-Pk1a.